Consider the following 232-residue polypeptide: Lipopolysaccharide core heptose(II) kinase WaaY (232 aa).

It belongs to the protein kinase superfamily. RfaY/WaaY family.

It catalyses the reaction alpha-D-Glc-(1-&gt;3)-[L-alpha-D-Hep-(1-&gt;7)]-L-alpha-D-Hep-(1-&gt;3)-4-O-PO3(2-)-L-alpha-D-Hep-(1-&gt;5)-[alpha-Kdo-(2-&gt;4)]-alpha-Kdo-(2-&gt;6)-lipid A + ATP = alpha-D-Glc-(1-&gt;3)-[L-alpha-D-Hep-(1-&gt;7)]-4-O-PO3(2-)-L-alpha-D-Hep-(1-&gt;3)-4-O-PO3(2-)-L-alpha-D-Hep-(1-&gt;5)-[alpha-Kdo-(2-&gt;4)]-alpha-Kdo-(2-&gt;6)-lipid A + ADP + H(+). It participates in bacterial outer membrane biogenesis; LPS core biosynthesis. In terms of biological role, kinase involved in the biosynthesis of the core oligosaccharide region of lipopolysaccharide (LPS). Catalyzes the phosphorylation of the second heptose unit (HepII) of the inner core. The protein is Lipopolysaccharide core heptose(II) kinase WaaY of Salmonella typhimurium (strain LT2 / SGSC1412 / ATCC 700720).